We begin with the raw amino-acid sequence, 341 residues long: tRNA dimethylallyltransferase (341 aa).

15–22 (GPTAAGKT) is a binding site for ATP. 17 to 22 (TAAGKT) is a substrate binding site. 4 interaction with substrate tRNA regions span residues 44 to 47 (DSAL), 168 to 172 (QRIQR), 253 to 258 (RCVGYR), and 302 to 309 (KRQITWLR).

This sequence belongs to the IPP transferase family. Monomer. The cofactor is Mg(2+).

It catalyses the reaction adenosine(37) in tRNA + dimethylallyl diphosphate = N(6)-dimethylallyladenosine(37) in tRNA + diphosphate. Catalyzes the transfer of a dimethylallyl group onto the adenine at position 37 in tRNAs that read codons beginning with uridine, leading to the formation of N6-(dimethylallyl)adenosine (i(6)A). This is tRNA dimethylallyltransferase from Verminephrobacter eiseniae (strain EF01-2).